A 415-amino-acid chain; its full sequence is Imidazolonepropionase (415 aa).

Residues histidine 76 and histidine 78 each contribute to the Fe(3+) site. The Zn(2+) site is built by histidine 76 and histidine 78. Residues arginine 85, tyrosine 148, and histidine 181 each contribute to the 4-imidazolone-5-propanoate site. N-formimidoyl-L-glutamate is bound at residue tyrosine 148. A Fe(3+)-binding site is contributed by histidine 246. A Zn(2+)-binding site is contributed by histidine 246. Glutamate 249 provides a ligand contact to 4-imidazolone-5-propanoate. Residue aspartate 320 coordinates Fe(3+). Aspartate 320 serves as a coordination point for Zn(2+). Asparagine 322 and glycine 324 together coordinate N-formimidoyl-L-glutamate. Threonine 325 serves as a coordination point for 4-imidazolone-5-propanoate.

The protein belongs to the metallo-dependent hydrolases superfamily. HutI family. It depends on Zn(2+) as a cofactor. Fe(3+) serves as cofactor.

The protein resides in the cytoplasm. It carries out the reaction 4-imidazolone-5-propanoate + H2O = N-formimidoyl-L-glutamate. It participates in amino-acid degradation; L-histidine degradation into L-glutamate; N-formimidoyl-L-glutamate from L-histidine: step 3/3. Functionally, catalyzes the hydrolytic cleavage of the carbon-nitrogen bond in imidazolone-5-propanoate to yield N-formimidoyl-L-glutamate. It is the third step in the universal histidine degradation pathway. The sequence is that of Imidazolonepropionase from Caldanaerobacter subterraneus subsp. tengcongensis (strain DSM 15242 / JCM 11007 / NBRC 100824 / MB4) (Thermoanaerobacter tengcongensis).